A 303-amino-acid chain; its full sequence is Cytosolic Fe-S cluster assembly factor CFD1 (303 aa).

15-22 is an ATP binding site; it reads GKGGVGKS. Positions 199 and 202 each coordinate [4Fe-4S] cluster.

It belongs to the Mrp/NBP35 ATP-binding proteins family. NUBP2/CFD1 subfamily. As to quaternary structure, heterotetramer of 2 NBP35 and 2 CFD1 chains. [4Fe-4S] cluster serves as cofactor.

It is found in the cytoplasm. Component of the cytosolic iron-sulfur (Fe/S) protein assembly (CIA) machinery. Required for maturation of extramitochondrial Fe-S proteins. The NBP35-CFD1 heterotetramer forms a Fe-S scaffold complex, mediating the de novo assembly of an Fe-S cluster and its transfer to target apoproteins. In Chaetomium globosum (strain ATCC 6205 / CBS 148.51 / DSM 1962 / NBRC 6347 / NRRL 1970) (Soil fungus), this protein is Cytosolic Fe-S cluster assembly factor CFD1.